Consider the following 341-residue polypeptide: Hyaluronan and proteoglycan link protein 2 (341 aa).

Positions 1–27 (MPSWIPLPAFCCLLLPWAFTVFHKTLG) are cleaved as a signal peptide. Positions 35-143 (PHYLLPPIHE…GIEDESVALT (109 aa)) constitute an Ig-like V-type domain. Intrachain disulfides connect cysteine 58/cysteine 129, cysteine 171/cysteine 241, cysteine 195/cysteine 216, cysteine 266/cysteine 337, and cysteine 291/cysteine 312. 2 consecutive Link domains span residues 149–243 (VVFP…FCFT) and 246–339 (LAGQ…YCYA).

This sequence belongs to the HAPLN family. In terms of tissue distribution, brain.

The protein localises to the secreted. The protein resides in the extracellular space. It localises to the extracellular matrix. In terms of biological role, mediates a firm binding of versican V2 to hyaluronic acid. May play a pivotal role in the formation of the hyaluronan-associated matrix in the central nervous system (CNS) which facilitates neuronal conduction and general structural stabilization. Binds to hyaluronic acid. The chain is Hyaluronan and proteoglycan link protein 2 (Hapln2) from Rattus norvegicus (Rat).